Consider the following 215-residue polypeptide: Adenylate kinase (215 aa).

Residue 10-15 (GSGKGT) participates in ATP binding. The segment at 30 to 59 (STGDLFRTNIENDTPLGKEIKQIVENGQLV) is NMP. Residues Thr31, Arg36, 57–59 (QLV), 85–88 (GFPR), and Gln92 each bind AMP. An LID region spans residues 121-158 (GRRICQSCCKIFNIYTLPTKEKEICDFCQGILYQRKDD). Arg122 contributes to the ATP binding site. Zn(2+)-binding residues include Cys125 and Cys128. 131-132 (IF) contacts ATP. Zn(2+) is bound by residues Cys145 and Cys148. Residues Arg155 and Arg166 each contribute to the AMP site. Residue Lys194 participates in ATP binding.

The protein belongs to the adenylate kinase family. Monomer.

Its subcellular location is the cytoplasm. The enzyme catalyses AMP + ATP = 2 ADP. It functions in the pathway purine metabolism; AMP biosynthesis via salvage pathway; AMP from ADP: step 1/1. In terms of biological role, catalyzes the reversible transfer of the terminal phosphate group between ATP and AMP. Plays an important role in cellular energy homeostasis and in adenine nucleotide metabolism. The polypeptide is Adenylate kinase (Borrelia recurrentis (strain A1)).